The following is a 730-amino-acid chain: uncharacterized protein (730 aa).

Over residues 615–625 (FDKENSFDPSD) the composition is skewed to basic and acidic residues. Disordered regions lie at residues 615 to 667 (FDKE…SSFS) and 684 to 730 (KSGS…FGKI). 2 stretches are compositionally biased toward low complexity: residues 653–667 (SSSS…SSFS) and 684–701 (KSGS…NSSS). Positions 713–723 (KKKKKKKKKKS) are enriched in basic residues.

This is an uncharacterized protein from Saccharomyces cerevisiae (strain ATCC 204508 / S288c) (Baker's yeast).